The chain runs to 548 residues: 4-methyl-5-nitrocatechol 5-monooxygenase (548 aa).

It belongs to the PheA/TfdB FAD monooxygenase family. Monomer. It depends on FAD as a cofactor.

It carries out the reaction 4-methyl-5-nitrocatechol + NADPH + O2 = 2-hydroxy-5-methylquinone + nitrite + NADP(+) + H2O + H(+). The catalysed reaction is 4-methyl-5-nitrocatechol + NADH + O2 = 2-hydroxy-5-methylquinone + nitrite + NAD(+) + H2O + H(+). Activated by magnesium or manganese ions. Inhibited by concentrations of 4-methyl-5-nitrocatechol (MNC) above 2 mM. Functionally, involved in the degradation of 2,4-dinitrotoluene (2,4-DNT). Catalyzes the removal of the nitro group from 4-methyl-5-nitrocatechol (MNC) to yield 2-hydroxy-5-methylquinone. It can use both NADH and NADPH as electron donors, but prefers NADPH. Also able to use 4-nitrocatechol as substrate. This Burkholderia sp protein is 4-methyl-5-nitrocatechol 5-monooxygenase.